The primary structure comprises 424 residues: Virion nicking-joining enzyme (424 aa).

2 consecutive PLD phosphodiesterase domains span residues 110 to 137 (LGGVLHTKFWISDNTHIYLGSANMDWRS) and 320 to 346 (YSRVNHAKYMVTDKTAYIGTSNWTGNY).

This sequence belongs to the orthopoxvirus OPG042 family.

Its subcellular location is the virion. In terms of biological role, DNA nicking enzyme that cleaves extruded cruciform DNA at its tip. Probably nicks viral hairpins. This is Virion nicking-joining enzyme (OPG042) from Homo sapiens (Human).